Reading from the N-terminus, the 128-residue chain is Glycine cleavage system H protein (128 aa).

One can recognise a Lipoyl-binding domain in the interval 25 to 107 (TVRVGITDFA…YEGGWLFEIT (83 aa)). Position 66 is an N6-lipoyllysine (Lys66).

It belongs to the GcvH family. The glycine cleavage system is composed of four proteins: P, T, L and H. The cofactor is (R)-lipoate.

In terms of biological role, the glycine cleavage system catalyzes the degradation of glycine. The H protein shuttles the methylamine group of glycine from the P protein to the T protein. The chain is Glycine cleavage system H protein from Micrococcus luteus (strain ATCC 4698 / DSM 20030 / JCM 1464 / CCM 169 / CCUG 5858 / IAM 1056 / NBRC 3333 / NCIMB 9278 / NCTC 2665 / VKM Ac-2230) (Micrococcus lysodeikticus).